The primary structure comprises 600 residues: Putative DNA 3'-5' helicase Rad25 (600 aa).

A Helicase ATP-binding domain is found at 253 to 402; that stretch reads VDRFEDASAG…DIYTLVGRPI (150 aa). 266-273 provides a ligand contact to ATP; that stretch reads GPPGSGKT. Positions 356 to 359 match the DEAH box motif; the sequence is DEVH. Positions 457-600 constitute a Helicase C-terminal domain; sequence EIEHLVDQHG…VTESDASHSP (144 aa). The interval 569 to 600 is disordered; it reads RGTEEEDHARSRMRHLSTKGVRVTESDASHSP. A compositionally biased stretch (basic and acidic residues) spans 590–600; sequence RVTESDASHSP.

It belongs to the helicase family. RAD25/XPB subfamily.

The enzyme catalyses Couples ATP hydrolysis with the unwinding of duplex DNA by translocating in the 3'-5' direction.. It catalyses the reaction ATP + H2O = ADP + phosphate + H(+). In Halobacterium salinarum (strain ATCC 700922 / JCM 11081 / NRC-1) (Halobacterium halobium), this protein is Putative DNA 3'-5' helicase Rad25.